Reading from the N-terminus, the 415-residue chain is Serine hydroxymethyltransferase (415 aa).

(6S)-5,6,7,8-tetrahydrofolate contacts are provided by residues Leu117 and 121–123 (GHL). N6-(pyridoxal phosphate)lysine is present on Lys225. Residues Glu241 and 349–351 (SPF) contribute to the (6S)-5,6,7,8-tetrahydrofolate site.

This sequence belongs to the SHMT family. Homodimer. Pyridoxal 5'-phosphate is required as a cofactor.

It is found in the cytoplasm. The catalysed reaction is (6R)-5,10-methylene-5,6,7,8-tetrahydrofolate + glycine + H2O = (6S)-5,6,7,8-tetrahydrofolate + L-serine. It participates in one-carbon metabolism; tetrahydrofolate interconversion. It functions in the pathway amino-acid biosynthesis; glycine biosynthesis; glycine from L-serine: step 1/1. In terms of biological role, catalyzes the reversible interconversion of serine and glycine with tetrahydrofolate (THF) serving as the one-carbon carrier. This reaction serves as the major source of one-carbon groups required for the biosynthesis of purines, thymidylate, methionine, and other important biomolecules. Also exhibits THF-independent aldolase activity toward beta-hydroxyamino acids, producing glycine and aldehydes, via a retro-aldol mechanism. The polypeptide is Serine hydroxymethyltransferase (Campylobacter hominis (strain ATCC BAA-381 / DSM 21671 / CCUG 45161 / LMG 19568 / NCTC 13146 / CH001A)).